The primary structure comprises 422 residues: Putative polyketide beta-ketoacyl synthase 1 (422 aa).

In terms of domain architecture, Ketosynthase family 3 (KS3) spans 2-416 (SRRVVVTGIG…GFQSAVVLTG (415 aa)). Catalysis depends on for beta-ketoacyl synthase activity residues Cys-169, His-309, and His-346.

It belongs to the thiolase-like superfamily. Beta-ketoacyl-ACP synthases family.

Its function is as follows. Involved in developmentally regulated synthesis of a compound biosynthetically related to polyketide antibiotics which is essential for spore color in Streptomyces halstedii. In Streptomyces halstedii, this protein is Putative polyketide beta-ketoacyl synthase 1 (sch1).